We begin with the raw amino-acid sequence, 252 residues long: 4-hydroxy-tetrahydrodipicolinate reductase (252 aa).

Residues Gly8–Met13, Cys84–Thr86, and Ser108–Met111 each bind NAD(+). The Proton donor/acceptor role is filled by His141. His142 is a (S)-2,3,4,5-tetrahydrodipicolinate binding site. The Proton donor role is filled by Lys145. Gly151–Thr152 is a binding site for (S)-2,3,4,5-tetrahydrodipicolinate.

The protein belongs to the DapB family.

The protein localises to the cytoplasm. The enzyme catalyses (S)-2,3,4,5-tetrahydrodipicolinate + NAD(+) + H2O = (2S,4S)-4-hydroxy-2,3,4,5-tetrahydrodipicolinate + NADH + H(+). It catalyses the reaction (S)-2,3,4,5-tetrahydrodipicolinate + NADP(+) + H2O = (2S,4S)-4-hydroxy-2,3,4,5-tetrahydrodipicolinate + NADPH + H(+). Its pathway is amino-acid biosynthesis; L-lysine biosynthesis via DAP pathway; (S)-tetrahydrodipicolinate from L-aspartate: step 4/4. Catalyzes the conversion of 4-hydroxy-tetrahydrodipicolinate (HTPA) to tetrahydrodipicolinate. This is 4-hydroxy-tetrahydrodipicolinate reductase from Clostridium botulinum (strain Eklund 17B / Type B).